The sequence spans 1027 residues: Pro-apoptotic serine protease nma111 (1027 aa).

The interval Met-1–Tyr-46 is disordered. Over residues Ser-31–Asn-42 the composition is skewed to polar residues. A serine protease region spans residues Val-81 to Asp-265. Residues His-119, Asp-150, and Ser-232 each act as charge relay system in the active site. PDZ domains follow at residues Gln-288–Gln-373 and Val-875–Asp-956. Residues His-991–Glu-1027 form a disordered region.

Belongs to the peptidase S1C family.

The protein localises to the nucleus. Functionally, nuclear serine protease which mediates apoptosis. This is Pro-apoptotic serine protease nma111 (nma111) from Aspergillus oryzae (strain ATCC 42149 / RIB 40) (Yellow koji mold).